The following is a 593-amino-acid chain: Protein GAMETE EXPRESSED 1 (593 aa).

Positions 1 to 24 (MDRFSRKCLLFLLLIILLDSPLTC) are cleaved as a signal peptide. The Extracellular portion of the chain corresponds to 25–427 (HSWGWFSSSS…LHNAMLLESR (403 aa)). Coiled coils occupy residues 156 to 194 (CQQL…SKSD) and 350 to 387 (EALQ…HDHL). The helical transmembrane segment at 428-448 (VIKAFVIYFLSIFVIYMFTST) threads the bilayer. The Cytoplasmic segment spans residues 449 to 457 (KQTYIIRPR). Residues 458-476 (LYIGLCVTLALEVASLRYV) traverse the membrane as a helical segment. Residues 477–485 (NDTERQAWM) lie on the Extracellular side of the membrane. A helical membrane pass occupies residues 486–506 (INLIRSLFALLASAQLLHAAL). The Cytoplasmic segment spans residues 507-593 (SYRDYEVLNH…TRRLYNFRPR (87 aa)).

As to quaternary structure, homodimer. In tricellular pollen, expressed in mature sperm cells. Not expressed in bicellular or unicellular pollen. Detected in ovules, roots and guard cells. Expressed in the embryo sac before cellularization, in the egg cell after cellularization, in the zygote/embryo immediately after fertilization and in the pollen vegetative cell.

It localises to the cell membrane. In terms of biological role, has a dual function during gametophyte development and early embryogenesis. Required for correct pollen maturation. The protein is Protein GAMETE EXPRESSED 1 (GEX1) of Arabidopsis thaliana (Mouse-ear cress).